The sequence spans 235 residues: Isoprenyl transferase (235 aa).

Aspartate 21 is a catalytic residue. Aspartate 21 contacts Mg(2+). Residues 22–25 (GNAR), tryptophan 26, lysine 34, histidine 38, and 66–68 (SSE) contribute to the substrate site. Catalysis depends on asparagine 69, which acts as the Proton acceptor. Substrate is bound by residues tryptophan 70, arginine 72, arginine 183, and 189–191 (RIS). Glutamate 202 contributes to the Mg(2+) binding site.

Belongs to the UPP synthase family. In terms of assembly, homodimer. Requires Mg(2+) as cofactor.

Catalyzes the condensation of isopentenyl diphosphate (IPP) with allylic pyrophosphates generating different type of terpenoids. This chain is Isoprenyl transferase, found in Rickettsia felis (strain ATCC VR-1525 / URRWXCal2) (Rickettsia azadi).